The following is a 332-amino-acid chain: NADH-quinone oxidoreductase subunit H (332 aa).

Helical transmembrane passes span 11–31, 77–97, 110–130, 156–176, 182–202, 240–260, 268–288, and 307–327; these read TYKI…IVWL, VIFI…WAVI, VGVL…IMGG, IGVI…NDII, LWFI…ALAE, NILL…LSPI, IPGA…FALV, and IFLP…FYFN.

It belongs to the complex I subunit 1 family. In terms of assembly, NDH-1 is composed of 14 different subunits. Subunits NuoA, H, J, K, L, M, N constitute the membrane sector of the complex.

The protein localises to the cell inner membrane. It catalyses the reaction a quinone + NADH + 5 H(+)(in) = a quinol + NAD(+) + 4 H(+)(out). In terms of biological role, NDH-1 shuttles electrons from NADH, via FMN and iron-sulfur (Fe-S) centers, to quinones in the respiratory chain. The immediate electron acceptor for the enzyme in this species is believed to be ubiquinone. Couples the redox reaction to proton translocation (for every two electrons transferred, four hydrogen ions are translocated across the cytoplasmic membrane), and thus conserves the redox energy in a proton gradient. This subunit may bind ubiquinone. This is NADH-quinone oxidoreductase subunit H from Pelagibacter ubique (strain HTCC1062).